A 478-amino-acid chain; its full sequence is Aspartyl/glutamyl-tRNA(Asn/Gln) amidotransferase subunit B (478 aa).

Belongs to the GatB/GatE family. GatB subfamily. Heterotrimer of A, B and C subunits.

The catalysed reaction is L-glutamyl-tRNA(Gln) + L-glutamine + ATP + H2O = L-glutaminyl-tRNA(Gln) + L-glutamate + ADP + phosphate + H(+). The enzyme catalyses L-aspartyl-tRNA(Asn) + L-glutamine + ATP + H2O = L-asparaginyl-tRNA(Asn) + L-glutamate + ADP + phosphate + 2 H(+). Allows the formation of correctly charged Asn-tRNA(Asn) or Gln-tRNA(Gln) through the transamidation of misacylated Asp-tRNA(Asn) or Glu-tRNA(Gln) in organisms which lack either or both of asparaginyl-tRNA or glutaminyl-tRNA synthetases. The reaction takes place in the presence of glutamine and ATP through an activated phospho-Asp-tRNA(Asn) or phospho-Glu-tRNA(Gln). This chain is Aspartyl/glutamyl-tRNA(Asn/Gln) amidotransferase subunit B, found in Dichelobacter nodosus (strain VCS1703A).